A 592-amino-acid polypeptide reads, in one-letter code: Imidazole glycerol phosphate synthase hisHF, chloroplastic (592 aa).

Residues 1 to 55 (MEATAAPFSSIVSSRQNFSSSSSIRASSPASLFLSQKSIGNVNRKFKSPRSLSVR) constitute a chloroplast transit peptide. In terms of domain architecture, Glutamine amidotransferase type-1 spans 63 to 271 (VVTLLDYGAG…LHPKLPATQK (209 aa)). Catalysis depends on for GATase activity residues Cys141, His246, and Glu248. Positions 280–592 (LAKRVIACLD…LQEERIEVRI (313 aa)) are cyclase. Active-site residues include Asp289 and Asp447.

This sequence in the C-terminal section; belongs to the HisA/HisF family.

The protein resides in the plastid. It localises to the chloroplast. The catalysed reaction is 5-[(5-phospho-1-deoxy-D-ribulos-1-ylimino)methylamino]-1-(5-phospho-beta-D-ribosyl)imidazole-4-carboxamide + L-glutamine = D-erythro-1-(imidazol-4-yl)glycerol 3-phosphate + 5-amino-1-(5-phospho-beta-D-ribosyl)imidazole-4-carboxamide + L-glutamate + H(+). It catalyses the reaction L-glutamine + H2O = L-glutamate + NH4(+). It participates in amino-acid biosynthesis; L-histidine biosynthesis; L-histidine from 5-phospho-alpha-D-ribose 1-diphosphate: step 5/9. Its function is as follows. IGPS catalyzes the conversion of PRFAR and glutamine to IGP, AICAR and glutamate. The glutaminase domain produces the ammonia necessary for the cyclase domain to produce IGP and AICAR from PRFAR. The ammonia is channeled to the active site of the cyclase domain. The sequence is that of Imidazole glycerol phosphate synthase hisHF, chloroplastic (HISN4) from Arabidopsis thaliana (Mouse-ear cress).